We begin with the raw amino-acid sequence, 409 residues long: Arginine biosynthesis bifunctional protein ArgJ (409 aa).

6 residues coordinate substrate: threonine 156, lysine 182, threonine 193, glutamate 280, asparagine 404, and serine 409. The active-site Nucleophile is the threonine 193.

It belongs to the ArgJ family. In terms of assembly, heterotetramer of two alpha and two beta chains.

The protein localises to the cytoplasm. It carries out the reaction N(2)-acetyl-L-ornithine + L-glutamate = N-acetyl-L-glutamate + L-ornithine. The enzyme catalyses L-glutamate + acetyl-CoA = N-acetyl-L-glutamate + CoA + H(+). It functions in the pathway amino-acid biosynthesis; L-arginine biosynthesis; L-ornithine and N-acetyl-L-glutamate from L-glutamate and N(2)-acetyl-L-ornithine (cyclic): step 1/1. Its pathway is amino-acid biosynthesis; L-arginine biosynthesis; N(2)-acetyl-L-ornithine from L-glutamate: step 1/4. In terms of biological role, catalyzes two activities which are involved in the cyclic version of arginine biosynthesis: the synthesis of N-acetylglutamate from glutamate and acetyl-CoA as the acetyl donor, and of ornithine by transacetylation between N(2)-acetylornithine and glutamate. The protein is Arginine biosynthesis bifunctional protein ArgJ of Ralstonia nicotianae (strain ATCC BAA-1114 / GMI1000) (Ralstonia solanacearum).